Reading from the N-terminus, the 400-residue chain is Phosphoglycerate kinase (400 aa).

Substrate is bound by residues 22 to 24 (DFN), arginine 38, 61 to 64 (HLGR), arginine 119, and arginine 152. ATP contacts are provided by residues lysine 205, glycine 296, glutamate 327, and 353–356 (GGDT).

Belongs to the phosphoglycerate kinase family. In terms of assembly, monomer.

The protein resides in the cytoplasm. It carries out the reaction (2R)-3-phosphoglycerate + ATP = (2R)-3-phospho-glyceroyl phosphate + ADP. Its pathway is carbohydrate degradation; glycolysis; pyruvate from D-glyceraldehyde 3-phosphate: step 2/5. The polypeptide is Phosphoglycerate kinase (Campylobacter jejuni subsp. jejuni serotype O:6 (strain 81116 / NCTC 11828)).